Reading from the N-terminus, the 113-residue chain is Hydrogenase maturation factor HypA (113 aa).

His2 is a binding site for Ni(2+). Zn(2+) contacts are provided by Cys73, Cys76, Cys89, and Cys92.

Belongs to the HypA/HybF family.

In terms of biological role, involved in the maturation of [NiFe] hydrogenases. Required for nickel insertion into the metal center of the hydrogenase. This is Hydrogenase maturation factor HypA from Picosynechococcus sp. (strain ATCC 27264 / PCC 7002 / PR-6) (Agmenellum quadruplicatum).